The primary structure comprises 144 residues: MPTINQLVRKGREDKVVKSKSPALQKGYNSFKKSQTNQSSPQKRGVCTRVGTMTPKKPNSALRKYARVRLTNGIEVTAYIGGIGHNLQEHSVVLVRGGRVKDLPGVRYHIVRGALDTAGVNNRKQGRSKYGTKRPKPGQAAAKK.

The segment at 1 to 55 (MPTINQLVRKGREDKVVKSKSPALQKGYNSFKKSQTNQSSPQKRGVCTRVGTMTP) is disordered. Polar residues predominate over residues 27-42 (GYNSFKKSQTNQSSPQ). Residue aspartate 102 is modified to 3-methylthioaspartic acid. Positions 119-144 (GVNNRKQGRSKYGTKRPKPGQAAAKK) are disordered. Residues 124–144 (KQGRSKYGTKRPKPGQAAAKK) show a composition bias toward basic residues.

This sequence belongs to the universal ribosomal protein uS12 family. In terms of assembly, part of the 30S ribosomal subunit. Contacts proteins S8 and S17. May interact with IF1 in the 30S initiation complex.

Its function is as follows. With S4 and S5 plays an important role in translational accuracy. Functionally, interacts with and stabilizes bases of the 16S rRNA that are involved in tRNA selection in the A site and with the mRNA backbone. Located at the interface of the 30S and 50S subunits, it traverses the body of the 30S subunit contacting proteins on the other side and probably holding the rRNA structure together. The combined cluster of proteins S8, S12 and S17 appears to hold together the shoulder and platform of the 30S subunit. This is Small ribosomal subunit protein uS12 from Brevibacillus brevis (strain 47 / JCM 6285 / NBRC 100599).